We begin with the raw amino-acid sequence, 378 residues long: Mannitol-1-phosphate 5-dehydrogenase (378 aa).

4–15 serves as a coordination point for NAD(+); it reads SVHFGAGNIGRG.

Belongs to the mannitol dehydrogenase family.

It carries out the reaction D-mannitol 1-phosphate + NAD(+) = beta-D-fructose 6-phosphate + NADH + H(+). In Streptococcus pneumoniae (strain JJA), this protein is Mannitol-1-phosphate 5-dehydrogenase.